The primary structure comprises 239 residues: Ribosomal RNA small subunit methyltransferase G (239 aa).

S-adenosyl-L-methionine is bound by residues G78, F83, 129-130 (AE), and R148.

This sequence belongs to the methyltransferase superfamily. RNA methyltransferase RsmG family.

Its subcellular location is the cytoplasm. Functionally, specifically methylates the N7 position of a guanine in 16S rRNA. The chain is Ribosomal RNA small subunit methyltransferase G from Clostridium tetani (strain Massachusetts / E88).